Here is a 226-residue protein sequence, read N- to C-terminus: MNENLFASFITPTMMGLPIVVTIIMFPSILFPSSERLISNRLHSFQHWLIKLIIKQMMLIHTPKGRTWALMIVSLIMFIGSTNLLGLLPHTFTPTTQLSMNLSMAIPLWAGAVILGFRHKLKNSLAHFLPQGTPISLIPMLIIIETISLFIQPMALAVRLTANITAGHLLMHLIGGATLVLMDISPPTATITFIILLLLTVLEFAVALIQAYVFTLLVSLYLHDNT.

6 helical membrane passes run 6–26 (FASF…IIMF), 68–88 (WALM…LGLL), 97–117 (QLSM…ILGF), 138–158 (IPML…ALAV), 164–184 (ITAG…LMDI), and 189–209 (ATIT…VALI).

It belongs to the ATPase A chain family. As to quaternary structure, component of the ATP synthase complex composed at least of ATP5F1A/subunit alpha, ATP5F1B/subunit beta, ATP5MC1/subunit c (homooctomer), MT-ATP6/subunit a, MT-ATP8/subunit 8, ATP5ME/subunit e, ATP5MF/subunit f, ATP5MG/subunit g, ATP5MK/subunit k, ATP5MJ/subunit j, ATP5F1C/subunit gamma, ATP5F1D/subunit delta, ATP5F1E/subunit epsilon, ATP5PF/subunit F6, ATP5PB/subunit b, ATP5PD/subunit d, ATP5PO/subunit OSCP. ATP synthase complex consists of a soluble F(1) head domain (subunits alpha(3) and beta(3)) - the catalytic core - and a membrane F(0) domain - the membrane proton channel (subunits c, a, 8, e, f, g, k and j). These two domains are linked by a central stalk (subunits gamma, delta, and epsilon) rotating inside the F1 region and a stationary peripheral stalk (subunits F6, b, d, and OSCP). Interacts with DNAJC30; interaction is direct.

Its subcellular location is the mitochondrion inner membrane. It catalyses the reaction H(+)(in) = H(+)(out). Functionally, subunit a, of the mitochondrial membrane ATP synthase complex (F(1)F(0) ATP synthase or Complex V) that produces ATP from ADP in the presence of a proton gradient across the membrane which is generated by electron transport complexes of the respiratory chain. ATP synthase complex consist of a soluble F(1) head domain - the catalytic core - and a membrane F(1) domain - the membrane proton channel. These two domains are linked by a central stalk rotating inside the F(1) region and a stationary peripheral stalk. During catalysis, ATP synthesis in the catalytic domain of F(1) is coupled via a rotary mechanism of the central stalk subunits to proton translocation. With the subunit c (ATP5MC1), forms the proton-conducting channel in the F(0) domain, that contains two crucial half-channels (inlet and outlet) that facilitate proton movement from the mitochondrial intermembrane space (IMS) into the matrix. Protons are taken up via the inlet half-channel and released through the outlet half-channel, following a Grotthuss mechanism. The polypeptide is ATP synthase F(0) complex subunit a (Rattus norvegicus (Rat)).